The following is a 292-amino-acid chain: NADH-cytochrome b5 reductase 1 (292 aa).

Residues 12 to 32 traverse the membrane as a helical segment; it reads ALLVVGTAIFAVLVGAKFLGG. An FAD-binding FR-type domain is found at 43–148; the sequence is TEFQNFVLKE…RGPKGAMVYT (106 aa). Residues 128-143 and 154-191 each bind FAD; these read TTLKIGDNMKVRGPKG and HIGMIAGGTGITPMLQIIKAIIRNRPRNGGNDTTQVDL.

This sequence belongs to the flavoprotein pyridine nucleotide cytochrome reductase family. Monomer. Component of the 2-(3-amino-3-carboxypropyl)histidine synthase complex composed of dph1, dph2, dph3 and a NADH-dependent reductase, predominantly cbr1. It depends on FAD as a cofactor.

Its subcellular location is the mitochondrion outer membrane. The catalysed reaction is 2 Fe(III)-[cytochrome b5] + NADH = 2 Fe(II)-[cytochrome b5] + NAD(+) + H(+). It catalyses the reaction 2 Fe(3+)-[Dph3] + NADH = 2 Fe(2+)-[Dph3] + NAD(+) + H(+). It participates in protein modification; peptidyl-diphthamide biosynthesis. NADH-dependent reductase for dph3 and cytochrome b5. Required for the first step of diphthamide biosynthesis, a post-translational modification of histidine which occurs in elongation factor 2. Dph1 and dph2 transfer a 3-amino-3-carboxypropyl (ACP) group from S-adenosyl-L-methionine (SAM) to a histidine residue, the reaction is assisted by a reduction system comprising dph3 and a NADH-dependent reductase, predominantly cbr1. By reducing dph3, also involved in the formation of the tRNA wobble base modification mcm5s 2U (5-methoxycarbonylmethyl-2-thiouridine), mediated by the elongator complex. The cytochrome b5/NADH cytochrome b5 reductase electron transfer system supports the catalytic activity of several sterol biosynthetic enzymes. The protein is NADH-cytochrome b5 reductase 1 (cbr1) of Aspergillus oryzae (strain ATCC 42149 / RIB 40) (Yellow koji mold).